The sequence spans 249 residues: Tryptophan synthase alpha chain (249 aa).

Residues Glu43 and Asp54 each act as proton acceptor in the active site.

It belongs to the TrpA family. As to quaternary structure, tetramer of two alpha and two beta chains.

The catalysed reaction is (1S,2R)-1-C-(indol-3-yl)glycerol 3-phosphate + L-serine = D-glyceraldehyde 3-phosphate + L-tryptophan + H2O. Its pathway is amino-acid biosynthesis; L-tryptophan biosynthesis; L-tryptophan from chorismate: step 5/5. The alpha subunit is responsible for the aldol cleavage of indoleglycerol phosphate to indole and glyceraldehyde 3-phosphate. This is Tryptophan synthase alpha chain from Campylobacter jejuni subsp. doylei (strain ATCC BAA-1458 / RM4099 / 269.97).